A 433-amino-acid polypeptide reads, in one-letter code: Cyclin-dependent kinase 15 (433 aa).

The segment at 46–83 is disordered; sequence ASSSTASFHPRGLEAASAQKLKSKRPRSNSDSFQEENL. The Protein kinase domain maps to 52–336; sequence SFHPRGLEAA…SKLPNYNPEW (285 aa). Residues 58–66 and E81 each bind ATP; that span reads LEAASAQKL. T173 serves as the catalytic Proton acceptor.

This sequence belongs to the protein kinase superfamily. CMGC Ser/Thr protein kinase family. CDC2/CDKX subfamily. Requires Mg(2+) as cofactor.

It carries out the reaction L-seryl-[protein] + ATP = O-phospho-L-seryl-[protein] + ADP + H(+). It catalyses the reaction L-threonyl-[protein] + ATP = O-phospho-L-threonyl-[protein] + ADP + H(+). Functionally, serine/threonine-protein kinase that acts like an antiapoptotic protein that counters TRAIL/TNFSF10-induced apoptosis by inducing phosphorylation of BIRC5 at 'Thr-34'. In Mus musculus (Mouse), this protein is Cyclin-dependent kinase 15 (Cdk15).